The sequence spans 301 residues: MEPQDLKTVLGAGLLSFPVTPFGPDGGFNEAVYREHVGWLASFEAAALFAAGGTGEFFSLAPDEIPAIVRAAKAAAGNTPIISGCGHGTEVAISIAKAAEKAGADGILLLPHYLIDAPQAGLYNHIKRVCDSIGIGVMVYNRDNSILQADTLKRLCDVCPNLVGFKDGSGELGLVRQISATMGDRLTYLGGMPTAELFAEAYLAAGFTTYSSAVFNFVPELAVRFYKALRAGRRAECETLLKDFFYPFMAIRNRSKGYAVAAIKAGVRLRGYDAGPVRSPLVDLTSEEMDMMASLMASVDR.

It belongs to the DapA family.

The enzyme catalyses 5-dehydro-4-deoxy-D-glucarate + H(+) = 2,5-dioxopentanoate + CO2 + H2O. The protein operates within carbohydrate acid metabolism; D-glucarate degradation; 2,5-dioxopentanoate from D-glucarate: step 2/2. This chain is Probable 5-dehydro-4-deoxyglucarate dehydratase, found in Chelativorans sp. (strain BNC1).